The chain runs to 129 residues: Small ribosomal subunit protein uS8 (129 aa).

This sequence belongs to the universal ribosomal protein uS8 family. Part of the 30S ribosomal subunit.

Functionally, one of the primary rRNA binding proteins, it binds directly to 16S rRNA central domain where it helps coordinate assembly of the platform of the 30S subunit. The sequence is that of Small ribosomal subunit protein uS8 from Thermoplasma acidophilum (strain ATCC 25905 / DSM 1728 / JCM 9062 / NBRC 15155 / AMRC-C165).